A 317-amino-acid polypeptide reads, in one-letter code: Beta-ketoacyl-[acyl-carrier-protein] synthase III (317 aa).

Active-site residues include Cys-112 and His-244. The interval 245–249 (QANVR) is ACP-binding. The active site involves Asn-274.

Belongs to the thiolase-like superfamily. FabH family. Homodimer.

Its subcellular location is the cytoplasm. The enzyme catalyses malonyl-[ACP] + acetyl-CoA + H(+) = 3-oxobutanoyl-[ACP] + CO2 + CoA. Its pathway is lipid metabolism; fatty acid biosynthesis. Catalyzes the condensation reaction of fatty acid synthesis by the addition to an acyl acceptor of two carbons from malonyl-ACP. Catalyzes the first condensation reaction which initiates fatty acid synthesis and may therefore play a role in governing the total rate of fatty acid production. Possesses both acetoacetyl-ACP synthase and acetyl transacylase activities. Its substrate specificity determines the biosynthesis of branched-chain and/or straight-chain of fatty acids. The protein is Beta-ketoacyl-[acyl-carrier-protein] synthase III of Rickettsia bellii (strain OSU 85-389).